The following is a 191-amino-acid chain: Iron-sulfur flavoprotein (191 aa).

4 residues coordinate [4Fe-4S] cluster: Cys47, Cys50, Cys53, and Cys59.

Belongs to the SsuE family. Isf subfamily. As to quaternary structure, homodimer. Requires FMN as cofactor. It depends on [4Fe-4S] cluster as a cofactor.

In terms of biological role, redox-active protein probably involved in electron transport during fermentation of acetate to methane. In Methanosarcina thermophila, this protein is Iron-sulfur flavoprotein (isf).